Consider the following 172-residue polypeptide: Small ribosomal subunit protein uS5 (172 aa).

One can recognise an S5 DRBM domain in the interval 16 to 79; the sequence is LKEKLVHINR…EDGKKNVVKV (64 aa).

It belongs to the universal ribosomal protein uS5 family. As to quaternary structure, part of the 30S ribosomal subunit. Contacts proteins S4 and S8.

Functionally, with S4 and S12 plays an important role in translational accuracy. In terms of biological role, located at the back of the 30S subunit body where it stabilizes the conformation of the head with respect to the body. The protein is Small ribosomal subunit protein uS5 of Prosthecochloris aestuarii (strain DSM 271 / SK 413).